A 656-amino-acid chain; its full sequence is RNA-binding protein EWS (656 aa).

Residues 1-285 form an EAD (Gln/Pro/Thr-rich) region; it reads MASTDYSTYS…GVYGQESGGF (285 aa). A run of 31 repeats spans residues 8–16, 17–27, 28–34, 35–42, 43–50, 51–59, 60–68, 69–75, 76–84, 85–91, 92–110, 111–116, 117–125, 126–156, 157–163, 164–170, 171–177, 178–188, 189–193, 194–201, 202–206, 207–212, 213–218, 219–224, 225–230, 231–238, 239–245, 246–252, 253–259, 260–276, and 277–285. A 31 X approximate tandem repeats region spans residues 8–285; sequence TYSQAAAQQG…GVYGQESGGF (278 aa). The segment covering 123–137 has biased composition (low complexity); it reads AYPAYGQQPAATAPT. The disordered stretch occupies residues 123–360; the sequence is AYPAYGQQPA…PVDPDEDSDN (238 aa). Positions 143 to 172 are enriched in polar residues; it reads NKPTETSQPQSSTGGYNQPSLGYGQSNYSY. The segment covering 192–266 has biased composition (low complexity); the sequence is PTSYSSTQPT…QSSSYGQQSS (75 aa). The IQ domain occupies 256–285; it reads QQSSSYGQQSSFRQDHPSSMGVYGQESGGF. Serine 266 carries the phosphoserine; by PKC modification. Arginine 300, arginine 302, arginine 304, arginine 309, arginine 314, arginine 317, and arginine 321 each carry asymmetric dimethylarginine. Gly residues predominate over residues 308–335; the sequence is DRGGMSRGGRGGGRGGMGSAGERGGFNK. Positions 336–350 are enriched in low complexity; the sequence is PGGPMDEGPDLDLGP. The 87-residue stretch at 361–447 folds into the RRM domain; the sequence is SAIYVQGLND…SKLKVSLARK (87 aa). Lysine 439 is modified (N6-acetyllysine). Disordered stretches follow at residues 448-525 and 547-656; these read KPPM…WQCP and KPEG…DRPY. An asymmetric dimethylarginine mark is found at arginine 455 and arginine 464. An Asymmetric dimethylarginine; alternate modification is found at arginine 471. Arginine 471 is modified (omega-N-methylarginine; alternate). Gly residues predominate over residues 472 to 490; that stretch reads GGPGGPGGPGGPMGRMGGR. Omega-N-methylarginine is present on arginine 486. Arginine 490 is modified (asymmetric dimethylarginine; by PRMT8). Residues arginine 494, arginine 500, and arginine 503 each carry the asymmetric dimethylarginine modification. Arginine 506 carries the asymmetric dimethylarginine; alternate modification. An Omega-N-methylarginine; alternate modification is found at arginine 506. A RanBP2-type zinc finger spans residues 518-549; the sequence is RAGDWQCPNPGCGNQNFAWRTECNQCKAPKPE. Positions 551–560 are enriched in pro residues; the sequence is FLPPPFPPPG. Asymmetric dimethylarginine occurs at positions 563 and 565. A compositionally biased stretch (gly residues) spans 566 to 591; that stretch reads GGPGGMRGGRGGLMDRGGPGGMFRGG. Arginine 572 carries the asymmetric dimethylarginine; alternate; by PRMT8 modification. Arginine 572 carries the omega-N-methylarginine; alternate; by PRMT8 modification. An asymmetric dimethylarginine mark is found at arginine 575, arginine 581, arginine 589, and arginine 592. The span at 592–606 shows a compositional bias: basic and acidic residues; the sequence is RGGDRGGFRGGRGMD. Residue arginine 596 is modified to Asymmetric dimethylarginine; alternate; by PRMT8. Arginine 596 is modified (omega-N-methylarginine; alternate; by PRMT8). Arginine 600 bears the Asymmetric dimethylarginine mark. Position 603 is an asymmetric dimethylarginine; by PRMT8 (arginine 603). Arginine 607 bears the Asymmetric dimethylarginine; alternate; by PRMT8 mark. Omega-N-methylarginine; alternate; by PRMT8 is present on arginine 607. Positions 607–618 are enriched in gly residues; that stretch reads RGGFGGGRRGGP. Arginine 615 is modified (asymmetric dimethylarginine; alternate). Position 615 is an omega-N-methylarginine; alternate (arginine 615). Asymmetric dimethylarginine occurs at positions 633 and 636. Residues 639–656 carry the Nuclear localization signal motif; sequence PGKMDKGEHRQERRDRPY. A compositionally biased stretch (basic and acidic residues) spans 641–656; the sequence is KMDKGEHRQERRDRPY.

Belongs to the RRM TET family. As to quaternary structure, binds POLR2C, SF1, calmodulin and RNA. Interacts with PTK2B/FAK2 and TDRD3. Binds calmodulin in the presence, but not in the absence, of calcium ion. Forms a complex with REC8, PRDM9, SYCP3 and SYCP1; complex formation is dependent of phosphorylated form of REC8 and requires PRDM9 bound to hotspot DNA; EWSR1 joins PRDM9 with the chromosomal axis through REC8. Phosphorylated; calmodulin-binding inhibits phosphorylation of Ser-266. Post-translationally, highly methylated on arginine residues. Methylation is mediated by PRMT1 and, at lower level by PRMT8. In terms of tissue distribution, ubiquitous.

It is found in the nucleus. It localises to the cytoplasm. The protein resides in the cell membrane. In terms of biological role, binds to ssRNA containing the consensus sequence 5'-AGGUAA-3'. Might normally function as a transcriptional repressor. EWS-fusion-proteins (EFPS) may play a role in the tumorigenic process. They may disturb gene expression by mimicking, or interfering with the normal function of CTD-POLII within the transcription initiation complex. They may also contribute to an aberrant activation of the fusion protein target genes. This is RNA-binding protein EWS (EWSR1) from Homo sapiens (Human).